The sequence spans 266 residues: Probable sulfate transport system permease protein cysT (266 aa).

A run of 7 helical transmembrane segments spans residues 12 to 32, 59 to 79, 91 to 111, 129 to 149, 181 to 201, 206 to 226, and 236 to 256; these read ILLF…FLLI, MAFY…WVLT, AAVD…LATV, IVFT…PFVI, VILP…FSRA, GSIV…SVLI, and LGAS…LLLI. The ABC transmembrane type-1 domain maps to 53–257; sequence YLLTVQMAFY…IALFTLLLIN (205 aa).

The protein belongs to the binding-protein-dependent transport system permease family. CysTW subfamily.

It is found in the plastid. Its subcellular location is the chloroplast membrane. Functionally, part of the ABC transporter complex cysAWTP (TC 3.A.1.6.1) involved in sulfate/thiosulfate import. Probably responsible for the translocation of the substrate across the membrane. In Chlorella vulgaris (Green alga), this protein is Probable sulfate transport system permease protein cysT (cysT).